Here is a 436-residue protein sequence, read N- to C-terminus: Trigger factor (436 aa).

The PPIase FKBP-type domain maps to G163 to P248.

The protein belongs to the FKBP-type PPIase family. Tig subfamily.

The protein localises to the cytoplasm. It catalyses the reaction [protein]-peptidylproline (omega=180) = [protein]-peptidylproline (omega=0). In terms of biological role, involved in protein export. Acts as a chaperone by maintaining the newly synthesized protein in an open conformation. Functions as a peptidyl-prolyl cis-trans isomerase. The protein is Trigger factor of Bordetella pertussis (strain Tohama I / ATCC BAA-589 / NCTC 13251).